Here is a 111-residue protein sequence, read N- to C-terminus: Putative membrane protein insertion efficiency factor (111 aa).

It belongs to the UPF0161 family.

It localises to the cell inner membrane. Functionally, could be involved in insertion of integral membrane proteins into the membrane. The protein is Putative membrane protein insertion efficiency factor of Methylobacterium nodulans (strain LMG 21967 / CNCM I-2342 / ORS 2060).